The sequence spans 269 residues: Interleukin-1 beta (269 aa).

The propeptide occupies 1–112 (MAMVPEITCD…EEPITFKNCD (112 aa)).

The protein belongs to the IL-1 family. As to quaternary structure, monomer. In its precursor form, weakly interacts with full-length MEFV; the mature cytokine does not interact at all. Interacts with integrins ITGAV:ITGBV and ITGA5:ITGB1; integrin-binding is required for IL1B signaling. Interacts with cargo receptor TMED10; the interaction is direct and is required for the secretion of IL1B mature form. Interacts with HSP90AB1; the interaction facilitates cargo translocation into the ERGIC. Interacts with HSP90B1; the interaction facilitates cargo translocation into the ERGIC.

The protein localises to the cytoplasm. It localises to the cytosol. It is found in the secreted. The protein resides in the lysosome. Its subcellular location is the extracellular exosome. In terms of biological role, potent pro-inflammatory cytokine. Initially discovered as the major endogenous pyrogen, induces prostaglandin synthesis, neutrophil influx and activation, T-cell activation and cytokine production, B-cell activation and antibody production, and fibroblast proliferation and collagen production. Promotes Th17 differentiation of T-cells. Synergizes with IL12/interleukin-12 to induce IFNG synthesis from T-helper 1 (Th1) cells. Plays a role in angiogenesis by inducing VEGF production synergistically with TNF and IL6. Involved in transduction of inflammation downstream of pyroptosis: its mature form is specifically released in the extracellular milieu by passing through the gasdermin-D (GSDMD) pore. The sequence is that of Interleukin-1 beta (IL1B) from Trichosurus vulpecula (Brush-tailed possum).